Consider the following 725-residue polypeptide: Beta-adducin (725 aa).

The interval 1–22 is disordered; sequence MSEDTVPEAASPPPSQGQHYFD. Residues Ser-11 and Ser-25 each carry the phosphoserine modification. At Thr-55 the chain carries Phosphothreonine. 2 positions are modified to phosphoserine: Ser-60 and Ser-344. The tract at residues 425-444 is interaction with calmodulin; the sequence is KQQKEKTRWLNTPNTYLRVN. The segment at 525–725 is disordered; it reads AEKSRSPSTE…KSKKKEKVES (201 aa). Phosphoserine occurs at positions 530 and 532. Thr-533 is modified (phosphothreonine). Residue Ser-535 is modified to Phosphoserine. Position 561 is a phosphothreonine (Thr-561). Residues 566 to 588 show a composition bias toward basic and acidic residues; it reads EEYKKEVERKKLEQEQEGEKDAA. Phosphoserine is present on residues Ser-594, Ser-598, Ser-602, and Ser-606. A compositionally biased stretch (polar residues) spans 596–621; that stretch reads VKSTPASPVQSPTRAGTKSPAVSPSK. Phosphothreonine is present on Thr-612. 3 positions are modified to phosphoserine: Ser-614, Ser-618, and Ser-620. Composition is skewed to basic and acidic residues over residues 622 to 631 and 639 to 654; these read ASEDAKKTEV and EPEK…KEEE. A Phosphothreonine modification is found at Thr-674. Residues Ser-678, Ser-685, Ser-688, Ser-692, Ser-696, Ser-698, Ser-700, Ser-702, and Ser-712 each carry the phosphoserine modification. Positions 687–700 are enriched in low complexity; the sequence is TSGPLSPEGSPSKS. The span at 701–725 shows a compositional bias: basic residues; that stretch reads PSKKKKKFRTPSFLKKSKKKEKVES. An interaction with calmodulin region spans residues 703–720; it reads KKKKKFRTPSFLKKSKKK.

This sequence belongs to the aldolase class II family. Adducin subfamily. In terms of assembly, heterodimer of an alpha and a beta subunit. Found in a complex with ADD2, DMTN and SLC2A1. Interacts with SLC2A1. Found in liver, kidney, spleen, heart and brain.

The protein resides in the cytoplasm. It localises to the cytoskeleton. It is found in the cell membrane. In terms of biological role, membrane-cytoskeleton-associated protein that promotes the assembly of the spectrin-actin network. Binds to the erythrocyte membrane receptor SLC2A1/GLUT1 and may therefore provide a link between the spectrin cytoskeleton to the plasma membrane. Binds to calmodulin. Calmodulin binds preferentially to the beta subunit. The protein is Beta-adducin (Add2) of Rattus norvegicus (Rat).